The following is a 464-amino-acid chain: Bifunctional protein GlmU (464 aa).

The interval 1 to 232 (MKHDELAAVI…ADEAMGINDR (232 aa)) is pyrophosphorylase. UDP-N-acetyl-alpha-D-glucosamine contacts are provided by residues 11 to 14 (LAAG), K25, Q76, and 81 to 82 (GT). D106 serves as a coordination point for Mg(2+). 4 residues coordinate UDP-N-acetyl-alpha-D-glucosamine: G143, E157, N172, and N230. N230 provides a ligand contact to Mg(2+). The linker stretch occupies residues 233–253 (VQLAQASALMRRRINENLMRA). Residues 254 to 464 (GVSFIDPEQT…RHDPKCKNKD (211 aa)) are N-acetyltransferase. UDP-N-acetyl-alpha-D-glucosamine contacts are provided by R336 and K354. H366 serves as the catalytic Proton acceptor. UDP-N-acetyl-alpha-D-glucosamine contacts are provided by Y369 and N380. Acetyl-CoA-binding positions include 389–390 (NY), S408, A426, and R443.

This sequence in the N-terminal section; belongs to the N-acetylglucosamine-1-phosphate uridyltransferase family. In the C-terminal section; belongs to the transferase hexapeptide repeat family. In terms of assembly, homotrimer. It depends on Mg(2+) as a cofactor.

Its subcellular location is the cytoplasm. It catalyses the reaction alpha-D-glucosamine 1-phosphate + acetyl-CoA = N-acetyl-alpha-D-glucosamine 1-phosphate + CoA + H(+). The enzyme catalyses N-acetyl-alpha-D-glucosamine 1-phosphate + UTP + H(+) = UDP-N-acetyl-alpha-D-glucosamine + diphosphate. It participates in nucleotide-sugar biosynthesis; UDP-N-acetyl-alpha-D-glucosamine biosynthesis; N-acetyl-alpha-D-glucosamine 1-phosphate from alpha-D-glucosamine 6-phosphate (route II): step 2/2. Its pathway is nucleotide-sugar biosynthesis; UDP-N-acetyl-alpha-D-glucosamine biosynthesis; UDP-N-acetyl-alpha-D-glucosamine from N-acetyl-alpha-D-glucosamine 1-phosphate: step 1/1. The protein operates within bacterial outer membrane biogenesis; LPS lipid A biosynthesis. Catalyzes the last two sequential reactions in the de novo biosynthetic pathway for UDP-N-acetylglucosamine (UDP-GlcNAc). The C-terminal domain catalyzes the transfer of acetyl group from acetyl coenzyme A to glucosamine-1-phosphate (GlcN-1-P) to produce N-acetylglucosamine-1-phosphate (GlcNAc-1-P), which is converted into UDP-GlcNAc by the transfer of uridine 5-monophosphate (from uridine 5-triphosphate), a reaction catalyzed by the N-terminal domain. The polypeptide is Bifunctional protein GlmU (Syntrophotalea carbinolica (strain DSM 2380 / NBRC 103641 / GraBd1) (Pelobacter carbinolicus)).